The chain runs to 317 residues: 1-phosphofructokinase (317 aa).

Residues 223-228 and 254-255 each bind ATP; these read SMGAEG and GD. D255 functions as the Proton acceptor in the catalytic mechanism.

The protein belongs to the carbohydrate kinase PfkB family.

It carries out the reaction beta-D-fructose 1-phosphate + ATP = beta-D-fructose 1,6-bisphosphate + ADP + H(+). Catalyzes the ATP-dependent phosphorylation of fructose-l-phosphate to fructose-l,6-bisphosphate. The protein is 1-phosphofructokinase of Vibrio cholerae serotype O1 (strain ATCC 39315 / El Tor Inaba N16961).